An 85-amino-acid polypeptide reads, in one-letter code: U4-theraphotoxin-Hhn1a (85 aa).

The signal sequence occupies residues 1–22 (MKVTLIAILTCAAVLVLHTTAA). A propeptide spanning residues 23–48 (EELEAESQPMEVGMPDTELAAVDEER) is cleaved from the precursor. Disulfide bonds link Cys52-Cys66, Cys56-Cys77, and Cys71-Cys82.

It belongs to the neurotoxin 12 (Hwtx-2) family. 02 (Hwtx-2) subfamily. As to quaternary structure, monomer. As to expression, expressed by the venom gland.

The protein resides in the secreted. Its function is as follows. Neurotoxin active on both insects and mammals. The protein is U4-theraphotoxin-Hhn1a of Cyriopagopus hainanus (Chinese bird spider).